Here is a 463-residue protein sequence, read N- to C-terminus: Flotillin-like protein 2 (463 aa).

Cys35 carries S-palmitoyl cysteine lipidation. Positions Glu305 to Glu354 form a coiled coil.

It belongs to the band 7/mec-2 family. Flotillin subfamily. Post-translationally, may be palmitoylated.

The protein localises to the cell membrane. It is found in the membrane. Its subcellular location is the caveola. Functionally, may act as a scaffolding protein within caveolar membranes, functionally participating in formation of caveolae or caveolae-like vesicles. In Arabidopsis thaliana (Mouse-ear cress), this protein is Flotillin-like protein 2 (FLOT2).